A 263-amino-acid chain; its full sequence is Ribosomal RNA small subunit methyltransferase A (263 aa).

Residues asparagine 13, threonine 15, glycine 40, glutamate 61, aspartate 85, and asparagine 105 each coordinate S-adenosyl-L-methionine.

It belongs to the class I-like SAM-binding methyltransferase superfamily. rRNA adenine N(6)-methyltransferase family. RsmA subfamily.

It is found in the cytoplasm. It carries out the reaction adenosine(1518)/adenosine(1519) in 16S rRNA + 4 S-adenosyl-L-methionine = N(6)-dimethyladenosine(1518)/N(6)-dimethyladenosine(1519) in 16S rRNA + 4 S-adenosyl-L-homocysteine + 4 H(+). Specifically dimethylates two adjacent adenosines (A1518 and A1519) in the loop of a conserved hairpin near the 3'-end of 16S rRNA in the 30S particle. May play a critical role in biogenesis of 30S subunits. The protein is Ribosomal RNA small subunit methyltransferase A of Mycoplasma pneumoniae (strain ATCC 29342 / M129 / Subtype 1) (Mycoplasmoides pneumoniae).